The sequence spans 391 residues: Deoxyguanosinetriphosphate triphosphohydrolase-like protein (391 aa).

The HD domain maps to 62 to 198 (RLTHSLEVST…ASLADDISYI (137 aa)).

This sequence belongs to the dGTPase family. Type 2 subfamily.

The protein is Deoxyguanosinetriphosphate triphosphohydrolase-like protein of Rickettsia akari (strain Hartford).